The following is a 784-amino-acid chain: Melanoma-associated antigen D1 (784 aa).

Residues 41–67 (PTNQATAAASGPNASPQSSQPPSANEV) are disordered. A compositionally biased stretch (low complexity) spans 47–65 (AAASGPNASPQSSQPPSAN). Position 97 is a phosphotyrosine (tyrosine 97). 4 stretches are compositionally biased toward polar residues: residues 195–214 (PTAE…TSQA), 232–246 (AQTS…NLES), 259–269 (NNLNVEESSSG), and 306–320 (LAWQ…QPAR). Positions 195-339 (PTAETQTQNI…PARQTPPAWQ (145 aa)) are disordered. 19 repeat units span residues 302 to 307 (WQTPLA), 308 to 313 (WQNPSG), 314 to 319 (WQNQPA), 338 to 343 (WQNPVA), 344 to 349 (WQNPVI), 350 to 355 (WPNPVI), 356 to 361 (WQNPVI), 362 to 367 (WPNPIV), 368 to 373 (WPGPVV), 374 to 379 (WPNPLA), 380 to 385 (WQNPPG), 386 to 391 (WQTPPG), 392 to 397 (WQTPPG), 398 to 403 (WQGPPD), 404 to 409 (WQGPPD), 410 to 415 (WPLPPD), 416 to 421 (WPLPPD), 422 to 427 (WPLPTD), and 428 to 433 (WPLPPD). A 22 X 6 AA tandem repeats of W-[PQ]-X-P-X-X region spans residues 302 to 450 (WQTPLAWQNP…VPPDWQNLRP (149 aa)). Positions 379 to 418 (AWQNPPGWQTPPGWQTPPGWQGPPDWQGPPDWPLPPDWPL) are disordered. A compositionally biased stretch (low complexity) spans 383 to 403 (PPGWQTPPGWQTPPGWQGPPD). The span at 404-418 (WQGPPDWPLPPDWPL) shows a compositional bias: pro residues. The stretch at 434–438 (WIPTD) is one 20; approximate repeat. A run of 2 repeats spans residues 439–444 (WPVPPD) and 445–450 (WQNLRP). Positions 441–471 (VPPDWQNLRPSPNLRPSPNSRASQNLGASQP) are disordered. Positions 447–461 (NLRPSPNLRPSPNSR) are enriched in low complexity. The MAGE domain occupies 477-675 (LQERANKLVK…RDWTAQFMEA (199 aa)).

In terms of assembly, interacts with DLX5, DLX7 and MSX2 and forms homomultimers. Interacts with UNC5A. Interacts with TRIM28 and PJA1. Interacts with NGFR/p75NTR and RORA.

It is found in the cytoplasm. The protein resides in the cell membrane. Its subcellular location is the nucleus. Its function is as follows. Involved in the apoptotic response after nerve growth factor (NGF) binding in neuronal cells. Inhibits cell cycle progression, and facilitates NGFR-mediated apoptosis. May act as a regulator of the function of DLX family members. May enhance ubiquitin ligase activity of RING-type zinc finger-containing E3 ubiquitin-protein ligases. Proposed to act through recruitment and/or stabilization of the Ubl-conjugating enzyme (E2) at the E3:substrate complex. Plays a role in the circadian rhythm regulation. May act as RORA co-regulator, modulating the expression of core clock genes such as BMAL1 and NFIL3, induced, or NR1D1, repressed. The protein is Melanoma-associated antigen D1 (MAGED1) of Sus scrofa (Pig).